Reading from the N-terminus, the 464-residue chain is MGTIYLFRKTQRSLLGKLTQEFRLVTADRRSWKILLFGAINVVCTGFLLTWCSSTNSMALTAYTYLTIFDLFSLITCLISYWVMMKKPSPTYSFGFERFEVLSVFASTVLAQLGALFILKESAERFVEQPEIHTGRLLVGTFVALCFNLFSMLSIRNKPFAYVSEAASTSWLQEHVADLSRSLCGIIPGLSSIFLPRMNPFVLIDIAGALALCITYMLIEINNYFAVDTASAIAIAVMTFGTMYPMSVYSGKVLLQTTPPHVIGQLDKLLREVSTLDGVLEVRNEHFWTLGFGTMAGSVHVRIRRDANEQMVLAHVTNRLNTLVSSLTVQIFKDEWARPVLASGAMPPNMLNIPDHHVIQMPSLKSTMDELNPMTSTPSKPSSPPPEFAFNTPGKNMNPVILSNNQTRPSGVGFNYGTTPYTTTFNHGLGVPGIGNTQGLRTGLTNVANRYGTYTPGQFTQFKQ.

Residues 1–33 (MGTIYLFRKTQRSLLGKLTQEFRLVTADRRSWK) are Cytoplasmic-facing. A helical membrane pass occupies residues 34-54 (ILLFGAINVVCTGFLLTWCSS). Topologically, residues 55–64 (TNSMALTAYT) are extracellular. The chain crosses the membrane as a helical span at residues 65-85 (YLTIFDLFSLITCLISYWVMM). At 86–98 (KKPSPTYSFGFER) the chain is on the cytoplasmic side. A helical transmembrane segment spans residues 99–119 (FEVLSVFASTVLAQLGALFIL). At 120–134 (KESAERFVEQPEIHT) the chain is on the extracellular side. Residues 135-155 (GRLLVGTFVALCFNLFSMLSI) form a helical membrane-spanning segment. The Cytoplasmic segment spans residues 156–200 (RNKPFAYVSEAASTSWLQEHVADLSRSLCGIIPGLSSIFLPRMNP). A helical transmembrane segment spans residues 201–221 (FVLIDIAGALALCITYMLIEI). The Extracellular segment spans residues 222–228 (NNYFAVD). The chain crosses the membrane as a helical span at residues 229–249 (TASAIAIAVMTFGTMYPMSVY). The Cytoplasmic portion of the chain corresponds to 250–464 (SGKVLLQTTP…TPGQFTQFKQ (215 aa)).

This sequence belongs to the cation diffusion facilitator (CDF) transporter (TC 2.A.4) family. SLC30A subfamily. In terms of assembly, heterodimer with SLC30A5; form a functional zinc ion transmembrane transporter.

It is found in the golgi apparatus. The protein resides in the trans-Golgi network membrane. In terms of biological role, has probably no intrinsic transporter activity but together with SLC30A5 forms a functional zinc ion:proton antiporter heterodimer, mediating zinc entry into the lumen of organelles along the secretory pathway. As part of that zinc ion:proton antiporter, contributes to zinc ion homeostasis within the early secretory pathway and regulates the activation and folding of enzymes like alkaline phosphatases and enzymes involved in phosphatidylinositol glycan anchor biosynthesis. The polypeptide is Zinc transporter 6 (slc30a6) (Xenopus tropicalis (Western clawed frog)).